Here is a 950-residue protein sequence, read N- to C-terminus: MTETPTAQPDRAADADTPQHRYTAELAGQIEGAWQQTWAVEGTFNVPNPVGELAPPDGTVPADKMFVQDMFPYPSGEGLHVGHPLGYIATDVYARYYRMTGRNVLHALGFDAFGLPAEQYAVQTGTHPRTRTEANIVNFRRQLGRLGLGHDTRRSFSTTDVDFYTWTQWIFLQIYNAWFDRDANRARPIAELIGEFESGVRTLDDGRPWSELSAGERADVVDSYRLVYRADSMVNWCPGLGTVLANEEVTADGRSDRGNFPVFRKRLRQWMMRITAYSDRLLEDLEVLDWPDKVKTMQRNWIGRSTGASVQFGTDAGDIEVFTTRPDTLFGATYLVLAPEHPLVEQLAAEQWPDDVDGRWTFGATTPREAVAAYRASIAAKSDLERQENKTKTGAFLGAYATNPANGQQVPIFIADYVLIGYGTGAIMAVPGHDQRDWEFAHEFGLPVVEVISGGDISEAAYAGDGLLVNSDYLDGLDVAAAKAAITDRLVADGRGRARVEYKLRDWLFARQRYWGEPFPIVYDSDGRPHPLPESALPVELPDVPDYSPVLFDPDDADSEPNPPLNKATDWVHVELDLGDGLQTYTRDTNVMPQWAGSSWYELRYTDPLNKEALCAKENEAYWMGPRPAEHGPDDPGGVDLYVGGVEHAVLHLLYSRFWHKVLYDLGHVSSREPYRRLVNQGYIQAFAYTDSRGSYVPAAEVVERDGKFWFEGAEVFQEFGKIGKSLKNSVSPDEICDNYGADTLRVYEMSMGPLEASRPWATKDVVGAHRFLQRVWRLVVDEQSGAVRVANHEALDTDTLRALHRTVAGVSEDYAALRNNTAAAKLIEYTNHLTKEGVTARAAIEPLVLMVAPLAPHLAEELWRRLGHDTSLAHGPFPVADPQYLVTDTVEYPVQVNGKVRSRITVDADAGKDTLEAAALADEKVQAFLNGATPKKVIVVPGRLVNLVV.

Positions 72-83 (PYPSGEGLHVGH) match the 'HIGH' region motif. Residues 722-726 (KIGKS) carry the 'KMSKS' region motif. Residue K725 participates in ATP binding.

Belongs to the class-I aminoacyl-tRNA synthetase family.

Its subcellular location is the cytoplasm. It catalyses the reaction tRNA(Leu) + L-leucine + ATP = L-leucyl-tRNA(Leu) + AMP + diphosphate. This Mycobacterium sp. (strain JLS) protein is Leucine--tRNA ligase.